A 421-amino-acid polypeptide reads, in one-letter code: Medium-chain specific acyl-CoA dehydrogenase, mitochondrial (421 aa).

Residues 1–25 (MAAMFRRSCRVLRSLSHFGWRSQHT) constitute a mitochondrion transit peptide. Lys79 carries the N6-acetyllysine modification. 158-167 (YCVTEPGAGS) serves as a coordination point for FAD. An octanoyl-CoA-binding site is contributed by Ser167. An N6-succinyllysine modification is found at Lys179. Position 191–193 (191–193 (WIT)) interacts with FAD. N6-acetyllysine; alternate is present on Lys212. Position 212 is an N6-succinyllysine; alternate (Lys212). Ser216 contributes to the octanoyl-CoA binding site. N6-acetyllysine; alternate occurs at positions 217, 259, and 271. N6-succinyllysine; alternate occurs at positions 217, 259, and 271. Asp278 serves as a coordination point for octanoyl-CoA. Lys279 carries the post-translational modification N6-acetyllysine. Octanoyl-CoA is bound at residue Arg281. Residue Lys301 is modified to N6-acetyllysine. FAD contacts are provided by residues 306–308 (RKT) and 316–317 (HQ). Residues Arg349 and Thr351 each coordinate octanoyl-CoA. Phosphothreonine is present on Thr351. 374 to 378 (QVFGG) lines the FAD pocket. Glu401 provides a ligand contact to octanoyl-CoA. Glu401 functions as the Proton acceptor in the catalytic mechanism. An FAD-binding site is contributed by 402–405 (GTAQ).

The protein belongs to the acyl-CoA dehydrogenase family. As to quaternary structure, homotetramer. Interacts with the heterodimeric electron transfer flavoprotein ETF. The cofactor is FAD. Post-translationally, acetylated. Could occur at proximity of the cofactor-binding sites and reduce the catalytic activity. Could be deacetylated by SIRT3.

It is found in the mitochondrion matrix. The catalysed reaction is a medium-chain 2,3-saturated fatty acyl-CoA + oxidized [electron-transfer flavoprotein] + H(+) = a medium-chain (2E)-enoyl-CoA + reduced [electron-transfer flavoprotein]. It catalyses the reaction pentanoyl-CoA + oxidized [electron-transfer flavoprotein] + H(+) = (2E)-pentenoyl-CoA + reduced [electron-transfer flavoprotein]. The enzyme catalyses hexanoyl-CoA + oxidized [electron-transfer flavoprotein] + H(+) = (2E)-hexenoyl-CoA + reduced [electron-transfer flavoprotein]. It carries out the reaction octanoyl-CoA + oxidized [electron-transfer flavoprotein] + H(+) = (2E)-octenoyl-CoA + reduced [electron-transfer flavoprotein]. The catalysed reaction is decanoyl-CoA + oxidized [electron-transfer flavoprotein] + H(+) = (2E)-decenoyl-CoA + reduced [electron-transfer flavoprotein]. It catalyses the reaction dodecanoyl-CoA + oxidized [electron-transfer flavoprotein] + H(+) = (2E)-dodecenoyl-CoA + reduced [electron-transfer flavoprotein]. The enzyme catalyses tetradecanoyl-CoA + oxidized [electron-transfer flavoprotein] + H(+) = (2E)-tetradecenoyl-CoA + reduced [electron-transfer flavoprotein]. It carries out the reaction oxidized [electron-transfer flavoprotein] + hexadecanoyl-CoA + H(+) = (2E)-hexadecenoyl-CoA + reduced [electron-transfer flavoprotein]. It participates in lipid metabolism; mitochondrial fatty acid beta-oxidation. In terms of biological role, medium-chain specific acyl-CoA dehydrogenase is one of the acyl-CoA dehydrogenases that catalyze the first step of mitochondrial fatty acid beta-oxidation, an aerobic process breaking down fatty acids into acetyl-CoA and allowing the production of energy from fats. The first step of fatty acid beta-oxidation consists in the removal of one hydrogen from C-2 and C-3 of the straight-chain fatty acyl-CoA thioester, resulting in the formation of trans-2-enoyl-CoA. Electron transfer flavoprotein (ETF) is the electron acceptor that transfers electrons to the main mitochondrial respiratory chain via ETF-ubiquinone oxidoreductase (ETF dehydrogenase). Among the different mitochondrial acyl-CoA dehydrogenases, medium-chain specific acyl-CoA dehydrogenase acts specifically on acyl-CoAs with saturated 6 to 12 carbons long primary chains. The protein is Medium-chain specific acyl-CoA dehydrogenase, mitochondrial of Sus scrofa (Pig).